The chain runs to 329 residues: 7,8-didemethyl-8-hydroxy-5-deazariboflavin synthase (329 aa).

Residues 1–235 enclose the Radical SAM core domain; that stretch reads MFIPVTNICR…SDVSVQVAPN (235 aa). Positions 9, 13, and 16 each coordinate [4Fe-4S] cluster.

Belongs to the radical SAM superfamily. CofG family. Consists of two subunits, CofG and CofH. [4Fe-4S] cluster is required as a cofactor.

It carries out the reaction 5-amino-5-(4-hydroxybenzyl)-6-(D-ribitylimino)-5,6-dihydrouracil + S-adenosyl-L-methionine = 7,8-didemethyl-8-hydroxy-5-deazariboflavin + 5'-deoxyadenosine + L-methionine + NH4(+) + H(+). It functions in the pathway cofactor biosynthesis; coenzyme F0 biosynthesis. Functionally, catalyzes the radical-mediated synthesis of 7,8-didemethyl-8-hydroxy-5-deazariboflavin from 5-amino-5-(4-hydroxybenzyl)-6-(D-ribitylimino)-5,6-dihydrouracil. The chain is 7,8-didemethyl-8-hydroxy-5-deazariboflavin synthase from Methanosarcina acetivorans (strain ATCC 35395 / DSM 2834 / JCM 12185 / C2A).